The following is a 192-amino-acid chain: Peptidyl-tRNA hydrolase (192 aa).

Tyrosine 18 is a tRNA binding site. Residue histidine 23 is the Proton acceptor of the active site. The tRNA site is built by phenylalanine 69, asparagine 71, and asparagine 117.

The protein belongs to the PTH family. As to quaternary structure, monomer.

The protein resides in the cytoplasm. The catalysed reaction is an N-acyl-L-alpha-aminoacyl-tRNA + H2O = an N-acyl-L-amino acid + a tRNA + H(+). Functionally, hydrolyzes ribosome-free peptidyl-tRNAs (with 1 or more amino acids incorporated), which drop off the ribosome during protein synthesis, or as a result of ribosome stalling. Catalyzes the release of premature peptidyl moieties from peptidyl-tRNA molecules trapped in stalled 50S ribosomal subunits, and thus maintains levels of free tRNAs and 50S ribosomes. The protein is Peptidyl-tRNA hydrolase of Neisseria meningitidis serogroup C (strain 053442).